The sequence spans 304 residues: UDP-N-acetylenolpyruvoylglucosamine reductase (304 aa).

An FAD-binding PCMH-type domain is found at 33 to 198; sequence RVGGPVDILL…ITATFCFESG (166 aa). Residue R177 is part of the active site. S227 functions as the Proton donor in the catalytic mechanism. E297 is a catalytic residue.

This sequence belongs to the MurB family. It depends on FAD as a cofactor.

It localises to the cytoplasm. The enzyme catalyses UDP-N-acetyl-alpha-D-muramate + NADP(+) = UDP-N-acetyl-3-O-(1-carboxyvinyl)-alpha-D-glucosamine + NADPH + H(+). It participates in cell wall biogenesis; peptidoglycan biosynthesis. In terms of biological role, cell wall formation. The chain is UDP-N-acetylenolpyruvoylglucosamine reductase from Clostridium botulinum (strain Eklund 17B / Type B).